The following is a 61-amino-acid chain: Probable tautomerase LL0574 (61 aa).

The active-site Proton acceptor; via imino nitrogen is the proline 2.

Belongs to the 4-oxalocrotonate tautomerase family.

The protein is Probable tautomerase LL0574 of Lactococcus lactis subsp. lactis (strain IL1403) (Streptococcus lactis).